A 218-amino-acid polypeptide reads, in one-letter code: Thiopurine S-methyltransferase (218 aa).

4 residues coordinate S-adenosyl-L-methionine: W10, L45, E66, and R123.

Belongs to the class I-like SAM-binding methyltransferase superfamily. TPMT family.

The protein resides in the cytoplasm. The catalysed reaction is S-adenosyl-L-methionine + a thiopurine = S-adenosyl-L-homocysteine + a thiopurine S-methylether.. The sequence is that of Thiopurine S-methyltransferase from Pseudomonas aeruginosa (strain LESB58).